The primary structure comprises 615 residues: Medium-chain acyl-CoA ligase ACSF2, mitochondrial (615 aa).

The transit peptide at 1–41 (MAVYHGMLRFGRLCIASLGARGPRTLLSRPRPNSKLQSVRA) directs the protein to the mitochondrion. Lys-179 is modified (N6-acetyllysine). N6-acetyllysine; alternate is present on Lys-182. Lys-182 bears the N6-succinyllysine; alternate mark. The residue at position 199 (Lys-199) is an N6-acetyllysine. 263 to 271 (TSGTTGNPK) contacts ATP. N6-acetyllysine occurs at positions 340 and 398. Lys-478 bears the N6-succinyllysine mark. Positions 493 and 508 each coordinate ATP. Residue Lys-510 is modified to N6-acetyllysine. N6-acetyllysine; alternate is present on residues Lys-544 and Lys-570. Lys-544 and Lys-570 each carry N6-succinyllysine; alternate. Lys-599 provides a ligand contact to ATP. Lys-599 is modified (N6-succinyllysine).

It belongs to the ATP-dependent AMP-binding enzyme family.

The protein localises to the mitochondrion. The catalysed reaction is a medium-chain fatty acid + ATP + CoA = a medium-chain fatty acyl-CoA + AMP + diphosphate. It catalyses the reaction octanoate + ATP + CoA = octanoyl-CoA + AMP + diphosphate. Its function is as follows. Acyl-CoA synthases catalyze the initial reaction in fatty acid metabolism, by forming a thioester with CoA. Has some preference toward medium-chain substrates. Plays a role in adipocyte differentiation. This chain is Medium-chain acyl-CoA ligase ACSF2, mitochondrial, found in Mus musculus (Mouse).